The primary structure comprises 195 residues: MRGASYVRNTAETRISIDLFLDGKGVYDGTTGIGFLDHMFTLLARHGQLDLTIGCQGDLEVDTHHTVEDLGICLGNALAQALGDKKGICRYGHAYVPMDETLVRVCLDLSGRPFLVYKVKIPVERVGQLETEMVEEFFRALSNRAGMNLHIHLLEGGNGHHIIEAIFKAFGRALRQAVAIDPDNAGRVLSTKGVL.

The protein belongs to the imidazoleglycerol-phosphate dehydratase family.

It is found in the cytoplasm. The enzyme catalyses D-erythro-1-(imidazol-4-yl)glycerol 3-phosphate = 3-(imidazol-4-yl)-2-oxopropyl phosphate + H2O. The protein operates within amino-acid biosynthesis; L-histidine biosynthesis; L-histidine from 5-phospho-alpha-D-ribose 1-diphosphate: step 6/9. This chain is Imidazoleglycerol-phosphate dehydratase, found in Heliobacterium modesticaldum (strain ATCC 51547 / Ice1).